The primary structure comprises 288 residues: Syntaxin PEP12 (288 aa).

The Cytoplasmic portion of the chain corresponds to 1–268 (MSEDEFFGGD…RYQKRTSRWR (268 aa)). Serine 2 and serine 23 each carry phosphoserine. Positions 195 to 257 (QNLIEQRDQE…QLASDELRKA (63 aa)) constitute a t-SNARE coiled-coil homology domain. A helical; Anchor for type IV membrane protein transmembrane segment spans residues 269–288 (VYLLIVLLVMLLFIFLIMKL).

This sequence belongs to the syntaxin family. Post-translationally, ubiquitinated.

Its subcellular location is the membrane. Its function is as follows. Plays a role in the sorting and targeting of vacuolar proteases. In Saccharomyces cerevisiae (strain ATCC 204508 / S288c) (Baker's yeast), this protein is Syntaxin PEP12 (PEP12).